The following is a 355-amino-acid chain: MTELKNDRYLRALLKQPVDYTPVWMMRQAGRYLPEYKATRAEAGDFMSLCKNAGLASEVTLQPLRRFPLDAAILFSDILTIPDAMGLGLYFEAGEGPKFERPITCKADVDKIGIPDPEGELQYVMNAVRQIRKDLKGEVPLIGFSGSPWTLATYMVEGGSSKAFTKIKKMMYAEPAILHLLLDKLADTVIEYLNAQIKAGAQSVMVFDTWGGVLTPRDYNEFSLRYMHKIVDALIRENEGRRVPVTLFTKNGGMWLEQIAATGCDAIGLDWTINIADAKKRIGDKVALQGNMDPSILYAQPERIRQEVSTILEGFGNEGTGHVFNLGHGIHLDVPPENAGVFVDAVHELSKPYHK.

Residues 27-31 (RQAGR), Asp77, Tyr154, Thr209, and His328 contribute to the substrate site.

Belongs to the uroporphyrinogen decarboxylase family. In terms of assembly, homodimer.

It localises to the cytoplasm. The catalysed reaction is uroporphyrinogen III + 4 H(+) = coproporphyrinogen III + 4 CO2. It functions in the pathway porphyrin-containing compound metabolism; protoporphyrin-IX biosynthesis; coproporphyrinogen-III from 5-aminolevulinate: step 4/4. Functionally, catalyzes the decarboxylation of four acetate groups of uroporphyrinogen-III to yield coproporphyrinogen-III. The protein is Uroporphyrinogen decarboxylase of Aliivibrio salmonicida (strain LFI1238) (Vibrio salmonicida (strain LFI1238)).